Consider the following 304-residue polypeptide: Tyrosine recombinase XerC (304 aa).

Residues 2–88 enclose the Core-binding (CB) domain; that stretch reads ENVKNFVKLF…ALRSFYKFLM (87 aa). The Tyr recombinase domain maps to 109 to 294; the sequence is RIPKFLYQKE…SKEMLRNTYM (186 aa). Residues R149, K173, H246, R249, and H272 contribute to the active site. Y281 functions as the O-(3'-phospho-DNA)-tyrosine intermediate in the catalytic mechanism.

Belongs to the 'phage' integrase family. XerC subfamily. As to quaternary structure, forms a cyclic heterotetrameric complex composed of two molecules of XerC and two molecules of XerD.

The protein resides in the cytoplasm. In terms of biological role, site-specific tyrosine recombinase, which acts by catalyzing the cutting and rejoining of the recombining DNA molecules. The XerC-XerD complex is essential to convert dimers of the bacterial chromosome into monomers to permit their segregation at cell division. It also contributes to the segregational stability of plasmids. In Bacillus subtilis (strain 168), this protein is Tyrosine recombinase XerC.